The following is a 224-amino-acid chain: Urease accessory protein UreF (224 aa).

Belongs to the UreF family. In terms of assembly, ureD, UreF and UreG form a complex that acts as a GTP-hydrolysis-dependent molecular chaperone, activating the urease apoprotein by helping to assemble the nickel containing metallocenter of UreC. The UreE protein probably delivers the nickel.

It is found in the cytoplasm. Functionally, required for maturation of urease via the functional incorporation of the urease nickel metallocenter. This Ectopseudomonas mendocina (strain ymp) (Pseudomonas mendocina) protein is Urease accessory protein UreF.